The sequence spans 379 residues: Cytochrome b (379 aa).

Helical transmembrane passes span 33-53, 77-98, 113-133, and 178-198; these read FGSLLGLCLITQIVTGLFLAM, WFLRNIHANGASLFFICLYLHI, WNVGVVLFLLVMMTAFVGYVL, and FFTFHFLFPFVIAGASMIHLL. Histidine 83 and histidine 97 together coordinate heme b. Heme b is bound by residues histidine 182 and histidine 196. A ubiquinone is bound at residue histidine 201. 4 consecutive transmembrane segments (helical) span residues 226 to 246, 288 to 308, 320 to 340, and 347 to 367; these read YKDLLGFIILLAGLMFLTLFS, LGGVLALLFSILILMIVPITH, LTQILFWTLVADMFILTWIGG, and FIIIGQIASIIYFALFLVFAP.

It belongs to the cytochrome b family. As to quaternary structure, the cytochrome bc1 complex contains 3 respiratory subunits (MT-CYB, CYC1 and UQCRFS1), 2 core proteins (UQCRC1 and UQCRC2) and probably 6 low-molecular weight proteins. The cofactor is heme b.

It is found in the mitochondrion inner membrane. Component of the ubiquinol-cytochrome c reductase complex (complex III or cytochrome b-c1 complex) that is part of the mitochondrial respiratory chain. The b-c1 complex mediates electron transfer from ubiquinol to cytochrome c. Contributes to the generation of a proton gradient across the mitochondrial membrane that is then used for ATP synthesis. This is Cytochrome b (mt-cyb) from Amia calva (Bowfin).